A 628-amino-acid polypeptide reads, in one-letter code: Vacuolar-sorting receptor 4 (628 aa).

Residues 1–24 (MKQLLCYLPWLLLLSLVVSPFNEA) form the signal peptide. Residues 25-569 (RFVVEKNSLS…SKTGSQVKSA (545 aa)) are Lumenal-facing. A PA domain is found at 56-168 (QYGGSMAGTV…GFGEKLKKAI (113 aa)). Asn-148, Asn-294, and Asn-434 each carry an N-linked (GlcNAc...) asparagine glycan. EGF-like domains lie at 416 to 466 (ETNE…SHCE) and 469 to 516 (GPGR…KKCE). Intrachain disulfides connect Cys-420-Cys-438, Cys-427-Cys-447, Cys-449-Cys-465, Cys-473-Cys-493, Cys-480-Cys-501, Cys-503-Cys-515, and Cys-545-Cys-558. In terms of domain architecture, EGF-like 3; calcium-binding spans 517 to 559 (DINECKEKKACQCPECSCKNTWGSYECSCSGDLLYMRDHDTCI). A helical transmembrane segment spans residues 570–590 (WAAVWLIMLSLGLAAAGAYLV). Over 591–628 (YKYRLRQYMDSEIRAIMAQYMPLDSQPEVPNHTNDERA) the chain is Cytoplasmic. Positions 610-613 (YMPL) match the Tyrosine-based internalization motif motif.

Belongs to the VSR (BP-80) family. In terms of tissue distribution, expressed at low levels in seeds, seedlings, roots, stems, leaves, flowers and siliques.

The protein resides in the membrane. The protein localises to the golgi apparatus membrane. Its subcellular location is the cytoplasmic vesicle. It is found in the clathrin-coated vesicle membrane. It localises to the prevacuolar compartment membrane. In terms of biological role, vacuolar-sorting receptor (VSR) involved in clathrin-coated vesicles sorting from Golgi apparatus to vacuoles. This chain is Vacuolar-sorting receptor 4 (VSR4), found in Arabidopsis thaliana (Mouse-ear cress).